The following is a 223-amino-acid chain: UPF0441 protein YgiB (223 aa).

A compositionally biased stretch (low complexity) spans 178–195 (TVPKTAMAPKPATTTTVT). The interval 178 to 223 (TVPKTAMAPKPATTTTVTRGGFGESVAKQSTMQRSATGTSSRSMGG) is disordered. Positions 204–223 (AKQSTMQRSATGTSSRSMGG) are enriched in polar residues.

This sequence belongs to the UPF0441 family.

The chain is UPF0441 protein YgiB from Shigella flexneri serotype 5b (strain 8401).